Consider the following 239-residue polypeptide: Pimeloyl-[acyl-carrier protein] methyl ester esterase (239 aa).

Substrate-binding positions include W20, 77–78 (SM), and 138–142 (FISLQ). The Nucleophile role is filled by S77. Active-site residues include D192 and H220. H220 is a substrate binding site.

The protein belongs to the AB hydrolase superfamily. Carboxylesterase BioH family. In terms of assembly, monomer.

The protein localises to the cytoplasm. The catalysed reaction is 6-carboxyhexanoyl-[ACP] methyl ester + H2O = 6-carboxyhexanoyl-[ACP] + methanol + H(+). It participates in cofactor biosynthesis; biotin biosynthesis. Functionally, the physiological role of BioH is to remove the methyl group introduced by BioC when the pimeloyl moiety is complete. It allows to synthesize pimeloyl-ACP via the fatty acid synthetic pathway through the hydrolysis of the ester bonds of pimeloyl-ACP esters. The sequence is that of Pimeloyl-[acyl-carrier protein] methyl ester esterase from Legionella pneumophila (strain Paris).